Reading from the N-terminus, the 251-residue chain is Phosphosulfolactate synthase (251 aa).

It belongs to the phosphosulfolactate synthase family. In terms of assembly, homotrimer. Mg(2+) serves as cofactor.

The catalysed reaction is (2R)-O-phospho-3-sulfolactate = phosphoenolpyruvate + sulfite + H(+). It participates in cofactor biosynthesis; coenzyme M biosynthesis; sulfoacetaldehyde from phosphoenolpyruvate and sulfite: step 1/4. Its function is as follows. Catalyzes the addition of sulfite to phosphoenolpyruvate (PEP) to yield (2R)-phospho-3-sulfolactate (PSL). The protein is Phosphosulfolactate synthase (comA) of Methanocaldococcus jannaschii (strain ATCC 43067 / DSM 2661 / JAL-1 / JCM 10045 / NBRC 100440) (Methanococcus jannaschii).